Here is a 792-residue protein sequence, read N- to C-terminus: Phenylalanine--tRNA ligase beta subunit (792 aa).

The tRNA-binding domain maps to 39 to 147 (AAAFSGVVVG…DNAPIGQDIR (109 aa)). The B5 domain occupies 400 to 475 (PERPAVRLRP…RLHGYDAIPA (76 aa)). Residues Asp-453, Asp-459, Glu-462, and Glu-463 each contribute to the Mg(2+) site. In terms of domain architecture, FDX-ACB spans 698–791 (SRQPAVTRDV…TETSLGARLR (94 aa)).

It belongs to the phenylalanyl-tRNA synthetase beta subunit family. Type 1 subfamily. In terms of assembly, tetramer of two alpha and two beta subunits. Mg(2+) is required as a cofactor.

The protein localises to the cytoplasm. The catalysed reaction is tRNA(Phe) + L-phenylalanine + ATP = L-phenylalanyl-tRNA(Phe) + AMP + diphosphate + H(+). In Aromatoleum aromaticum (strain DSM 19018 / LMG 30748 / EbN1) (Azoarcus sp. (strain EbN1)), this protein is Phenylalanine--tRNA ligase beta subunit.